Here is a 281-residue protein sequence, read N- to C-terminus: Pantothenate synthetase (281 aa).

Residue 30 to 37 (MGYLHEGH) coordinates ATP. Residue H37 is the Proton donor of the active site. A (R)-pantoate-binding site is contributed by Q61. Residue Q61 coordinates beta-alanine. Residue 147 to 150 (GEKD) coordinates ATP. (R)-pantoate is bound at residue Q153. ATP-binding positions include I176 and 184–187 (KSSR).

This sequence belongs to the pantothenate synthetase family. Homodimer.

It localises to the cytoplasm. It catalyses the reaction (R)-pantoate + beta-alanine + ATP = (R)-pantothenate + AMP + diphosphate + H(+). Its pathway is cofactor biosynthesis; (R)-pantothenate biosynthesis; (R)-pantothenate from (R)-pantoate and beta-alanine: step 1/1. In terms of biological role, catalyzes the condensation of pantoate with beta-alanine in an ATP-dependent reaction via a pantoyl-adenylate intermediate. This Clostridium botulinum (strain Langeland / NCTC 10281 / Type F) protein is Pantothenate synthetase.